Here is a 108-residue protein sequence, read N- to C-terminus: Nucleoid-associated protein IL1848 (108 aa).

2 disordered regions span residues Met-1–Glu-26 and Lys-88–Phe-108. Low complexity predominate over residues Met-9–Glu-26.

Belongs to the YbaB/EbfC family. As to quaternary structure, homodimer.

The protein resides in the cytoplasm. It is found in the nucleoid. Functionally, binds to DNA and alters its conformation. May be involved in regulation of gene expression, nucleoid organization and DNA protection. The chain is Nucleoid-associated protein IL1848 from Idiomarina loihiensis (strain ATCC BAA-735 / DSM 15497 / L2-TR).